The sequence spans 799 residues: Lon protease 4 (799 aa).

The Lon N-terminal domain maps to 15-204 (FPLLPLRTGV…RVAGLLAEAS (190 aa)). 356-363 (GPPGVGKT) is an ATP binding site. One can recognise a Lon proteolytic domain in the interval 595–776 (TSVAGVATGL…SQVIAAALEE (182 aa)). Residues Ser-682 and Lys-725 contribute to the active site.

Belongs to the peptidase S16 family. Homohexamer. Organized in a ring with a central cavity.

It is found in the cytoplasm. It carries out the reaction Hydrolysis of proteins in presence of ATP.. Functionally, ATP-dependent serine protease that mediates the selective degradation of mutant and abnormal proteins as well as certain short-lived regulatory proteins. Required for cellular homeostasis and for survival from DNA damage and developmental changes induced by stress. Degrades polypeptides processively to yield small peptide fragments that are 5 to 10 amino acids long. Binds to DNA in a double-stranded, site-specific manner. In Sorangium cellulosum (strain So ce56) (Polyangium cellulosum (strain So ce56)), this protein is Lon protease 4.